We begin with the raw amino-acid sequence, 1301 residues long: ABC transporter BEA3 (1301 aa).

The tract at residues 1-30 (MGKRTAENSAANGEGEEKHPEIGVDGRPEK) is disordered. Over residues 15–30 (GEEKHPEIGVDGRPEK) the composition is skewed to basic and acidic residues. The next 4 helical transmembrane spans lie at 54–74 (VGVIASIGVGITLPLLNIVFG), 103–123 (LYLLGLFLGRLVLGYITNFAF), 177–197 (LGVFVEYNATMIASIIVAFIY), and 203–223 (LVTFTAVVFITFSVSLVLPYI). In terms of domain architecture, ABC transmembrane type-1 1 spans 54 to 345 (VGVIASIGVG…ISTPLLAVSK (292 aa)). Residue asparagine 229 is glycosylated (N-linked (GlcNAc...) asparagine). A run of 2 helical transmembrane segments spans residues 281 to 301 (FIALQYGLVFFSSYAAFGLAF) and 313 to 333 (INQLGAIIVVLFSVMMIVTAM). An ABC transporter 1 domain is found at 378–667 (IILEDVTFAY…EAGLYYNLVN (290 aa)). 413–420 (GPSGSGKS) contacts ATP. Residues 442 to 454 (VEKPTDKKNNGGK) are compositionally biased toward basic and acidic residues. The interval 442–461 (VEKPTDKKNNGGKEEDEQEL) is disordered. N-linked (GlcNAc...) asparagine glycans are attached at residues asparagine 511 and asparagine 618. Positions 682–708 (VIAKEERPSSVHEKAHTESTIEEKPLE) are disordered. An ABC transmembrane type-1 2 domain is found at 735–1024 (ALTLFFSACA…ALSFGPNVAQ (290 aa)). 6 consecutive transmembrane segments (helical) span residues 745 to 765 (GAAVPFQAWLFAKVIIVFGYL), 779 to 799 (SLMWTVLAISAGLAYCATFFL), 858 to 878 (SVFIALWTLMGTIAIALAFAW), 880 to 900 (LALVSLCVVVPILLAAGYWRM), 961 to 981 (WVSLLYAFSDSATIGCQAIVL), and 987 to 1007 (LLLSGEYDLESFFVCFMSVLN). The ABC transporter 2 domain occupies 1060–1296 (IELENIYFKY…RGVYWQMCQS (237 aa)). An ATP-binding site is contributed by 1094-1101 (GASGSGKS).

It belongs to the ABC transporter superfamily. ABCB family. Multidrug resistance exporter (TC 3.A.1.201) subfamily.

It is found in the cell membrane. In terms of biological role, ABC transporter; part of the gene cluster that mediates the biosynthesis of beauvericin (BEA), a non-ribosomal cyclic hexadepsipeptide that shows antibiotic, antifungal, insecticidal, and cancer cell antiproliferative and antihaptotactic activity. Functions as a regulator of beauvericin production, rather than in BEA transport out of the cell. Beauvericin has low toxicity to the producing fungus and BEA3 does not play a role in detoxification and self-protection of the producing fungus. This Gibberella fujikuroi (strain CBS 195.34 / IMI 58289 / NRRL A-6831) (Bakanae and foot rot disease fungus) protein is ABC transporter BEA3.